The sequence spans 229 residues: RNA pyrophosphohydrolase (229 aa).

Residues 6–149 enclose the Nudix hydrolase domain; the sequence is GFRPNVGIIL…KRGVYEMALT (144 aa). Residues 38–59 carry the Nudix box motif; the sequence is GGIDRGETPEQAMFRELHEEVG. Residues 168–229 are disordered; that stretch reads SGMRPREAHE…QVLHPDPGKA (62 aa).

This sequence belongs to the Nudix hydrolase family. RppH subfamily. Requires a divalent metal cation as cofactor.

Functionally, accelerates the degradation of transcripts by removing pyrophosphate from the 5'-end of triphosphorylated RNA, leading to a more labile monophosphorylated state that can stimulate subsequent ribonuclease cleavage. This chain is RNA pyrophosphohydrolase, found in Delftia acidovorans (strain DSM 14801 / SPH-1).